The following is a 348-amino-acid chain: Uroporphyrinogen decarboxylase (348 aa).

Residues 28 to 32, D78, Y154, T209, and H325 contribute to the substrate site; that span reads RQAGR.

The protein belongs to the uroporphyrinogen decarboxylase family. In terms of assembly, homodimer.

Its subcellular location is the cytoplasm. The enzyme catalyses uroporphyrinogen III + 4 H(+) = coproporphyrinogen III + 4 CO2. The protein operates within porphyrin-containing compound metabolism; protoporphyrin-IX biosynthesis; coproporphyrinogen-III from 5-aminolevulinate: step 4/4. Functionally, catalyzes the decarboxylation of four acetate groups of uroporphyrinogen-III to yield coproporphyrinogen-III. This is Uroporphyrinogen decarboxylase from Rhodopseudomonas palustris (strain BisB5).